We begin with the raw amino-acid sequence, 78 residues long: uncharacterized protein (78 aa).

The tract at residues 1–28 (MQANHSVSYLYESSTSKRSNGLFSQTQK) is disordered.

This is an uncharacterized protein from Saccharomyces cerevisiae (strain ATCC 204508 / S288c) (Baker's yeast).